The sequence spans 641 residues: Mannosyl-oligosaccharide 1,2-alpha-mannosidase IB (641 aa).

At threonine 2 the chain carries N-acetylthreonine. The Cytoplasmic segment spans residues 2-36 (TTPALLPLSGRRIPPLNLGPPSFPHHRATLRLSEK). A helical; Signal-anchor for type II membrane protein membrane pass occupies residues 37-57 (FILLLILSAFITLCFGAFFFL). At 58-641 (PDSSKHKRFD…STLSGNPAVR (584 aa)) the chain is on the lumenal side. Cysteine 462 and cysteine 494 are joined by a disulfide. Glutamate 508 serves as the catalytic Proton donor. Threonine 619 lines the Ca(2+) pocket. Asparagine 631 carries N-linked (GlcNAc...) asparagine glycosylation.

The protein belongs to the glycosyl hydrolase 47 family. Ca(2+) serves as cofactor.

The protein resides in the golgi apparatus membrane. It catalyses the reaction N(4)-(alpha-D-Man-(1-&gt;2)-alpha-D-Man-(1-&gt;2)-alpha-D-Man-(1-&gt;3)-[alpha-D-Man-(1-&gt;2)-alpha-D-Man-(1-&gt;3)-[alpha-D-Man-(1-&gt;2)-alpha-D-Man-(1-&gt;6)]-alpha-D-Man-(1-&gt;6)]-beta-D-Man-(1-&gt;4)-beta-D-GlcNAc-(1-&gt;4)-beta-D-GlcNAc)-L-asparaginyl-[protein] (N-glucan mannose isomer 9A1,2,3B1,2,3) + 4 H2O = N(4)-(alpha-D-Man-(1-&gt;3)-[alpha-D-Man-(1-&gt;3)-[alpha-D-Man-(1-&gt;6)]-alpha-D-Man-(1-&gt;6)]-beta-D-Man-(1-&gt;4)-beta-D-GlcNAc-(1-&gt;4)-beta-D-GlcNAc)-L-asparaginyl-[protein] (N-glucan mannose isomer 5A1,2) + 4 beta-D-mannose. The enzyme catalyses N(4)-(alpha-D-Man-(1-&gt;2)-alpha-D-Man-(1-&gt;2)-alpha-D-Man-(1-&gt;3)-[alpha-D-Man-(1-&gt;3)-[alpha-D-Man-(1-&gt;2)-alpha-D-Man-(1-&gt;6)]-alpha-D-Man-(1-&gt;6)]-beta-D-Man-(1-&gt;4)-beta-D-GlcNAc-(1-&gt;4)-beta-D-GlcNAc)-L-asparaginyl-[protein] (N-glucan mannose isomer 8A1,2,3B1,3) + 3 H2O = N(4)-(alpha-D-Man-(1-&gt;3)-[alpha-D-Man-(1-&gt;3)-[alpha-D-Man-(1-&gt;6)]-alpha-D-Man-(1-&gt;6)]-beta-D-Man-(1-&gt;4)-beta-D-GlcNAc-(1-&gt;4)-beta-D-GlcNAc)-L-asparaginyl-[protein] (N-glucan mannose isomer 5A1,2) + 3 beta-D-mannose. It participates in protein modification; protein glycosylation. Inhibited by both 1-deoxymannojirimycin and kifunensine. In terms of biological role, involved in the maturation of Asn-linked oligosaccharides. Progressively trim alpha-1,2-linked mannose residues from Man(9)GlcNAc(2) to produce Man(5)GlcNAc(2). This chain is Mannosyl-oligosaccharide 1,2-alpha-mannosidase IB (Man1a2), found in Mus musculus (Mouse).